A 265-amino-acid chain; its full sequence is MTISSKISSDFDKQSALKVITGLNNFNIPQIKQMALASEIAKVTYLDIVADTDIIKEVESVSKIPICVSAVKSKELLKCQKTGVNILEIGNYDCFYEQGRLFHSEEIKLISKETRNLLPHATLCVTLPHILKIEEQVKLASDLQRIGIDMIQTEGKSTSISKTDHLSGMIQKSASTFSSTYTVSSKIRLPIISASGISSLTSPIAFLYGASGIGIGSNIRRLQDIGSMVIYIYEVQAAISSNHNIQQNINHSIQSSKISHQLIPY.

This sequence belongs to the ycf23 family.

The protein localises to the plastid. It is found in the chloroplast. This is an uncharacterized protein from Porphyra purpurea (Red seaweed).